The primary structure comprises 263 residues: Large ribosomal subunit protein uL23m (263 aa).

The N-terminal 45 residues, 1 to 45 (MPRLTVGTKNMLYPLQKTLAVGSCKPEQVPIRSLASVVESSSKIL), are a transit peptide targeting the mitochondrion.

It belongs to the universal ribosomal protein uL23 family. In terms of assembly, component of the mitochondrial large ribosomal subunit (mt-LSU). Mature yeast 74S mitochondrial ribosomes consist of a small (37S) and a large (54S) subunit. The 37S small subunit contains a 15S ribosomal RNA (15S mt-rRNA) and 34 different proteins. The 54S large subunit contains a 21S rRNA (21S mt-rRNA) and 46 different proteins. uL23m forms the wall of the exit tunnel. Interacts with the C-terminus of OXA1.

Its subcellular location is the mitochondrion. Component of the mitochondrial ribosome (mitoribosome), a dedicated translation machinery responsible for the synthesis of mitochondrial genome-encoded proteins, including at least some of the essential transmembrane subunits of the mitochondrial respiratory chain. The mitoribosomes are attached to the mitochondrial inner membrane and translation products are cotranslationally integrated into the membrane. The chain is Large ribosomal subunit protein uL23m (MRP20) from Saccharomyces cerevisiae (strain ATCC 204508 / S288c) (Baker's yeast).